The sequence spans 366 residues: MAPKINKIVNGPIPDSFLADETKRLDSLKFDGQRLEVLDQLLLPHEFKYIPVNDVSDAFNVIKSMQVRGAPLIAVVGSLGLLLEFNKNSELNIETIREKIEYLITSRPTAVDLRNSVTGLIPILETEGITDDEKLAKCQEYLLNVYTAEKLQNRILLWNAYQELLTAFPGKEKFTVMTICNTGSLATVSWGTALGVIRALHSENRLNLAYVLETRPYNQGIRLTATELLHGQVPFKLITDSMAAWAMKNHQLDCVLVGADNVARNGDTANKIGTYMLAVLCKHHNINFYPVVPFTTINKNISSGEEIKIEERAASELLRVNGVLVGNSECPVWNPAFDVTPAHLITKILTDFGNWSPAALEEQIPR.

The Proton donor role is filled by aspartate 260.

It belongs to the eIF-2B alpha/beta/delta subunits family. MtnA subfamily.

The protein resides in the cytoplasm. It is found in the nucleus. The catalysed reaction is 5-(methylsulfanyl)-alpha-D-ribose 1-phosphate = 5-(methylsulfanyl)-D-ribulose 1-phosphate. The protein operates within amino-acid biosynthesis; L-methionine biosynthesis via salvage pathway; L-methionine from S-methyl-5-thio-alpha-D-ribose 1-phosphate: step 1/6. Catalyzes the interconversion of methylthioribose-1-phosphate (MTR-1-P) into methylthioribulose-1-phosphate (MTRu-1-P). The sequence is that of Methylthioribose-1-phosphate isomerase from Caenorhabditis briggsae.